The primary structure comprises 183 residues: Transmembrane protein 252 (183 aa).

The next 2 helical transmembrane spans lie at 8–28 and 39–59; these read ILCALSLLTGFLMICLGGFFI and LVVAYVLLPMGFVILLSGIFW.

It is found in the membrane. This chain is Transmembrane protein 252 (Tmem252), found in Mus musculus (Mouse).